The primary structure comprises 137 residues: uncharacterized protein (137 aa).

This sequence belongs to the ycf72 family.

It is found in the plastid. The protein localises to the chloroplast. This is an uncharacterized protein from Saccharum hybrid (Sugarcane).